We begin with the raw amino-acid sequence, 72 residues long: Small ribosomal subunit protein bS20 (72 aa).

This sequence belongs to the bacterial ribosomal protein bS20 family.

In terms of biological role, binds directly to 16S ribosomal RNA. The sequence is that of Small ribosomal subunit protein bS20 (rpsT) from Proteus mirabilis.